A 304-amino-acid chain; its full sequence is Bifunctional protein FolD (304 aa).

NADP(+) contacts are provided by residues 176–178 (GAS), I201, and I242.

It belongs to the tetrahydrofolate dehydrogenase/cyclohydrolase family. In terms of assembly, homodimer.

It carries out the reaction (6R)-5,10-methylene-5,6,7,8-tetrahydrofolate + NADP(+) = (6R)-5,10-methenyltetrahydrofolate + NADPH. It catalyses the reaction (6R)-5,10-methenyltetrahydrofolate + H2O = (6R)-10-formyltetrahydrofolate + H(+). The protein operates within one-carbon metabolism; tetrahydrofolate interconversion. Catalyzes the oxidation of 5,10-methylenetetrahydrofolate to 5,10-methenyltetrahydrofolate and then the hydrolysis of 5,10-methenyltetrahydrofolate to 10-formyltetrahydrofolate. In Gluconobacter oxydans (strain 621H) (Gluconobacter suboxydans), this protein is Bifunctional protein FolD.